Here is a 188-residue protein sequence, read N- to C-terminus: GMP synthase [glutamine-hydrolyzing] subunit A (188 aa).

Residues 1 to 188 (MIVILNNGGQ…FCKVCGLLGE (188 aa)) form the Glutamine amidotransferase type-1 domain. Catalysis depends on Cys-76, which acts as the Nucleophile. Active-site residues include His-163 and Glu-165.

As to quaternary structure, heterodimer composed of a glutamine amidotransferase subunit (A) and a GMP-binding subunit (B).

The enzyme catalyses XMP + L-glutamine + ATP + H2O = GMP + L-glutamate + AMP + diphosphate + 2 H(+). It participates in purine metabolism; GMP biosynthesis; GMP from XMP (L-Gln route): step 1/1. Functionally, catalyzes the synthesis of GMP from XMP. The sequence is that of GMP synthase [glutamine-hydrolyzing] subunit A from Methanococcus aeolicus (strain ATCC BAA-1280 / DSM 17508 / OCM 812 / Nankai-3).